We begin with the raw amino-acid sequence, 667 residues long: Autophagy-related protein 20 (667 aa).

Positions 1–94 (MKQKKNRFGS…DESFKSTRAN (94 aa)) are disordered. Over residues 38–47 (SSSSRSSSTQ) the composition is skewed to low complexity. The segment covering 55–67 (SLASVHTSDMHQS) has biased composition (polar residues). Over residues 76–85 (DDNPFLDQDD) the composition is skewed to acidic residues. Positions 185–331 (KLINDRVQIL…DFLDPNNINW (147 aa)) constitute a PX domain. A 1,2-diacyl-sn-glycero-3-phospho-(1D-myo-inositol-3-phosphate) is bound by residues Arg-222, Ser-224, Lys-248, and Arg-297. Residues 524-562 (ELQRGVQPRNGNTASGASGNDESSVKKPQASKSQSSSYG) form a disordered region. Positions 532-545 (RNGNTASGASGNDE) are enriched in polar residues. Low complexity predominate over residues 549-560 (KKPQASKSQSSS). Residues 588-652 (QTTMANLIKE…SKYLKDYAKK (65 aa)) adopt a coiled-coil conformation.

Belongs to the sorting nexin family.

It is found in the endosome membrane. Its subcellular location is the preautophagosomal structure membrane. In terms of biological role, required for cytoplasm to vacuole transport (Cvt), pexophagy and mitophagy. Also involved in endoplasmic reticulum-specific autophagic process and is essential for the survival of cells subjected to severe ER stress. Functions in protein retrieval from the endocytic pathway. This Vanderwaltozyma polyspora (strain ATCC 22028 / DSM 70294 / BCRC 21397 / CBS 2163 / NBRC 10782 / NRRL Y-8283 / UCD 57-17) (Kluyveromyces polysporus) protein is Autophagy-related protein 20 (ATG20).